The sequence spans 76 residues: Omega-agatoxin-Aa3b (76 aa).

Disulfide bonds link Cys2-Cys19, Cys9-Cys25, Cys16-Cys52, Cys18-Cys40, Cys27-Cys38, and Cys59-Cys67.

This sequence belongs to the neurotoxin 04 (omega-agtx) family. 03 (type II/III omega-agtx) subfamily. Expressed by the venom gland.

It localises to the secreted. In terms of biological role, omega-agatoxins are antagonists of voltage-gated calcium channels. This toxin blocks calcium channels in insect central neurons but not at peripheral neuromuscular junctions. In vertebrates, it is broadly active against all high-threshold Cav1/CACNA1 channels and Cav2.2/CACNA1B channels. This is Omega-agatoxin-Aa3b from Agelenopsis aperta (North American funnel-web spider).